Reading from the N-terminus, the 76-residue chain is Tautomerase PptA (76 aa).

Catalysis depends on Pro2, which acts as the Proton acceptor; via imino nitrogen.

Belongs to the 4-oxalocrotonate tautomerase family. PptA subfamily. Homodimer.

The protein resides in the cytoplasm. This Enterobacter sp. (strain 638) protein is Tautomerase PptA.